The chain runs to 319 residues: Acetyl-coenzyme A carboxylase carboxyl transferase subunit alpha (319 aa).

The region spanning 35–296 is the CoA carboxyltransferase C-terminal domain; that stretch reads DLDKEIEQLE…KATLLRQLAE (262 aa).

Belongs to the AccA family. As to quaternary structure, acetyl-CoA carboxylase is a heterohexamer composed of biotin carboxyl carrier protein (AccB), biotin carboxylase (AccC) and two subunits each of ACCase subunit alpha (AccA) and ACCase subunit beta (AccD).

Its subcellular location is the cytoplasm. The enzyme catalyses N(6)-carboxybiotinyl-L-lysyl-[protein] + acetyl-CoA = N(6)-biotinyl-L-lysyl-[protein] + malonyl-CoA. It functions in the pathway lipid metabolism; malonyl-CoA biosynthesis; malonyl-CoA from acetyl-CoA: step 1/1. In terms of biological role, component of the acetyl coenzyme A carboxylase (ACC) complex. First, biotin carboxylase catalyzes the carboxylation of biotin on its carrier protein (BCCP) and then the CO(2) group is transferred by the carboxyltransferase to acetyl-CoA to form malonyl-CoA. The polypeptide is Acetyl-coenzyme A carboxylase carboxyl transferase subunit alpha (Vibrio vulnificus (strain CMCP6)).